Reading from the N-terminus, the 287-residue chain is tRNA selenocysteine 1-associated protein 1 (287 aa).

2 RRM domains span residues 3–86 (ASLW…YATY) and 96–175 (YSLF…VAIP).

It belongs to the RRM TRSPAP family. As to quaternary structure, component of the tRNA(Sec) complex composed at least of EEFSEC, SECISBP2, SEPHS1, SEPSECS, TRNAU1AP and tRNA(Sec). Found in a complex with tRNA(Sec). Interacts with SEPSECS. Associates with mRNP and/or polysomes. Found in a complex with EEFSEC, SECISBP2, TRNAU1AP and tRNA(Sec).

Its subcellular location is the nucleus. It localises to the cytoplasm. Involved in the early steps of selenocysteine biosynthesis and tRNA(Sec) charging to the later steps resulting in the cotranslational incorporation of selenocysteine into selenoproteins. Stabilizes the SECISBP2, EEFSEC and tRNA(Sec) complex. May be involved in the methylation of tRNA(Sec). Enhances efficiency of selenoproteins synthesis. This chain is tRNA selenocysteine 1-associated protein 1 (TRNAU1AP), found in Homo sapiens (Human).